We begin with the raw amino-acid sequence, 141 residues long: MAIERTLSIIKPDAVAKNVIGQIYARFEAAGLKIVAARMVHLARPEAERFYAVHKERPFFKDLVEFMISGPVMVQVLEGENAVLKNRELMGATDPKKAQTGTIRADFADSIDANAVHGSDAAETAQAEVAFFFPGLNIYPR.

ATP is bound by residues Lys11, Phe59, Arg87, Thr93, Arg104, and Asn114. His117 (pros-phosphohistidine intermediate) is an active-site residue.

This sequence belongs to the NDK family. As to quaternary structure, homotetramer. It depends on Mg(2+) as a cofactor.

The protein resides in the cytoplasm. It carries out the reaction a 2'-deoxyribonucleoside 5'-diphosphate + ATP = a 2'-deoxyribonucleoside 5'-triphosphate + ADP. The catalysed reaction is a ribonucleoside 5'-diphosphate + ATP = a ribonucleoside 5'-triphosphate + ADP. Major role in the synthesis of nucleoside triphosphates other than ATP. The ATP gamma phosphate is transferred to the NDP beta phosphate via a ping-pong mechanism, using a phosphorylated active-site intermediate. This chain is Nucleoside diphosphate kinase, found in Verminephrobacter eiseniae (strain EF01-2).